A 372-amino-acid polypeptide reads, in one-letter code: MSSANIVPSNMGITKFLLLTISTSSVVAGVFALKPFFHINFGLHLLSHYQYWRILLWQFIYWNSTEVFQALFIIYQARDVERLLGSHRFASFCVYMFILGMFVTPIFSFLYSLLFKNLDYIQPGPTFLIFAILYQYYYIVPSTVFVRLFNIKFTDKFQMVIPMIGLAFSHFPSTFINAFLGWTMGMFYHLSLLPGTSWRLPIRFVKPALSPTHVFIRPPYSDMQNASTFNPETLFALPTGLDAERTENENQVENPVSNADANDSPTRQNARATAIASSSNTAASFRNRQQISHPPLGRTSSSSVLPTGPASQLYDMLSGRSERPELGNIREEDINTVQTIMQTSRAQAIQALSQTNDVQRAVELLLEQTADY.

Transmembrane regions (helical) follow at residues 26–46 (VVAGVFALKPFFHINFGLHLL), 54–74 (ILLWQFIYWNSTEVFQALFII), 95–115 (YMFILGMFVTPIFSFLYSLLF), 126–146 (TFLIFAILYQYYYIVPSTVFV), and 160–180 (VIPMIGLAFSHFPSTFINAFL). Positions 246 to 314 (TENENQVENP…LPTGPASQLY (69 aa)) are disordered. Residues 249–268 (ENQVENPVSNADANDSPTRQ) show a composition bias toward polar residues. Ser-264 carries the phosphoserine modification. Residue Thr-266 is modified to Phosphothreonine. Over residues 269–284 (NARATAIASSSNTAAS) the composition is skewed to low complexity. Polar residues predominate over residues 286 to 305 (RNRQQISHPPLGRTSSSSVL). Residues 332–368 (EDINTVQTIMQTSRAQAIQALSQTNDVQRAVELLLEQ) form the UBA domain.

Component of the DSC E3 ubiquitin ligase complex composed of dsc1, dsc2, dsc3 and dsc4.

The protein resides in the golgi apparatus membrane. The catalysed reaction is S-ubiquitinyl-[E2 ubiquitin-conjugating enzyme]-L-cysteine + [acceptor protein]-L-lysine = [E2 ubiquitin-conjugating enzyme]-L-cysteine + N(6)-ubiquitinyl-[acceptor protein]-L-lysine.. Its pathway is protein modification; protein ubiquitination. Functionally, component of the DSC E3 ubiquitin ligase complex which is required for the sre1 transcriptional activator proteolytic cleavage to release the soluble transcription factor from the membrane in low oxygen or sterol conditions. The complex also plays an important role in the multivesicular body (MVB) pathway and functions in a post-endoplasmic reticulum pathway for protein degradation. The chain is DSC E3 ubiquitin ligase complex subunit 2 (dsc2) from Schizosaccharomyces pombe (strain 972 / ATCC 24843) (Fission yeast).